The chain runs to 342 residues: 4-hydroxy-2-oxovalerate aldolase (342 aa).

In terms of domain architecture, Pyruvate carboxyltransferase spans 5 to 257 (ITLHDMTLRD…DTGVDVWKIQ (253 aa)). 13–14 (RD) is a binding site for substrate. Position 14 (Asp14) interacts with Mn(2+). Residue His17 is the Proton acceptor of the active site. Ser167 and His196 together coordinate substrate. The Mn(2+) site is built by His196 and His198. Tyr287 contacts substrate.

Belongs to the 4-hydroxy-2-oxovalerate aldolase family.

The enzyme catalyses (S)-4-hydroxy-2-oxopentanoate = acetaldehyde + pyruvate. The sequence is that of 4-hydroxy-2-oxovalerate aldolase from Acidovorax sp. (strain JS42).